The chain runs to 23 residues: Coenzyme PQQ synthesis protein A (23 aa).

The pyrroloquinoline quinone (Glu-Tyr) cross-link spans 15–19 (EVTLY).

Belongs to the PqqA family.

It functions in the pathway cofactor biosynthesis; pyrroloquinoline quinone biosynthesis. Functionally, required for coenzyme pyrroloquinoline quinone (PQQ) biosynthesis. PQQ is probably formed by cross-linking a specific glutamate to a specific tyrosine residue and excising these residues from the peptide. This Colwellia psychrerythraea (strain 34H / ATCC BAA-681) (Vibrio psychroerythus) protein is Coenzyme PQQ synthesis protein A.